Here is a 290-residue protein sequence, read N- to C-terminus: Ribosomal RNA small subunit methyltransferase A (290 aa).

The S-adenosyl-L-methionine site is built by asparagine 27, leucine 29, glycine 54, glutamate 75, aspartate 100, and asparagine 125.

It belongs to the class I-like SAM-binding methyltransferase superfamily. rRNA adenine N(6)-methyltransferase family. RsmA subfamily.

The protein resides in the cytoplasm. It carries out the reaction adenosine(1518)/adenosine(1519) in 16S rRNA + 4 S-adenosyl-L-methionine = N(6)-dimethyladenosine(1518)/N(6)-dimethyladenosine(1519) in 16S rRNA + 4 S-adenosyl-L-homocysteine + 4 H(+). Functionally, specifically dimethylates two adjacent adenosines (A1518 and A1519) in the loop of a conserved hairpin near the 3'-end of 16S rRNA in the 30S particle. May play a critical role in biogenesis of 30S subunits. This Streptococcus pyogenes serotype M1 protein is Ribosomal RNA small subunit methyltransferase A.